Consider the following 411-residue polypeptide: Arginine deiminase (411 aa).

The Amidino-cysteine intermediate role is filled by Cys401.

It belongs to the arginine deiminase family. In terms of processing, glycosylated.

The protein localises to the cytoplasm. The enzyme catalyses L-arginine + H2O = L-citrulline + NH4(+). The protein operates within amino-acid degradation; L-arginine degradation via ADI pathway; carbamoyl phosphate from L-arginine: step 1/2. The polypeptide is Arginine deiminase (arcA) (Streptococcus pyogenes serotype M1).